Reading from the N-terminus, the 369-residue chain is MKTPFEKIRIISCILVIVSTNVVGQKCNGGANCIPLEECTDLFQQLKQGNSPQLTRLLRGLHCGFEDLNSPKICCPPEFLARRSAFSSAGTNSNPTSILPNEKVCGIQNNDRIFGGIQTEIDEHPWMALLRYDKPLGWGFYCGGVLIAPMYVLTAAHCVKGSDLPSSWQLSQVRLGEWNTSTETDCVEGDCSGPVQDIPVQQIIAHENYDPNDKDQQNDIALLRLSRNAQFNDFVSPICLPTSNELRQNEFESDYMEVAGWGKTETRSESDVKLKVRVPIVNREECANVYSNVDRRVTNKQICAGGLAGRDSCRGDSGGALMGQSPKANNWYVFGVVSYGPSPCGTEGWPGVYTRVGSFMDWILSKLEQ.

The N-terminal stretch at 1-24 is a signal peptide; sequence MKTPFEKIRIISCILVIVSTNVVG. The propeptide occupies 25–81; the sequence is QKCNGGANCIPLEECTDLFQQLKQGNSPQLTRLLRGLHCGFEDLNSPKICCPPEFLA. The region spanning 26 to 75 is the Clip domain; it reads KCNGGANCIPLEECTDLFQQLKQGNSPQLTRLLRGLHCGFEDLNSPKICC. Disulfide bonds link Cys-27/Cys-74, Cys-33/Cys-63, Cys-39/Cys-75, Cys-105/Cys-239, Cys-142/Cys-158, Cys-186/Cys-191, Cys-286/Cys-303, and Cys-313/Cys-344. Positions 113-368 constitute a Peptidase S1 domain; it reads IFGGIQTEID…FMDWILSKLE (256 aa). His-157 functions as the Charge relay system in the catalytic mechanism. Ca(2+)-binding residues include Glu-177, Asn-179, Thr-182, and Asp-185. N-linked (GlcNAc...) asparagine glycosylation occurs at Asn-179. The active-site Charge relay system is Asp-219. The active-site Charge relay system is the Ser-317.

It belongs to the peptidase S1 family. CLIP subfamily. As to quaternary structure, in the active form, heterodimer of a light chain and a heavy chain; disulfide-linked. Post-translationally, proteolytically cleaved for activation. Cleavage produces a light chain and a catalytic heavy chain which remains covalently associated probably through an interchain disulfide bond. In terms of tissue distribution, in larvae, expressed in the fat body and hemocytes.

It is found in the secreted. The protein localises to the cytoplasm. Its activity is regulated as follows. Inhibited by (p-amidinophenyl) methanesulfonyl fluoride, p-nitrophenyl-p'-guanidinobenzoate, D-phenylalanyl-L-prolyl-L-arginyl chloromethane, leupeptin, antipain and to a lesser extent by antithrombin III. Functionally, endopeptidase with selective post-Arg cleavage site. Functions in the innate immune response to fungal and Gram-positive bacterial infections. Upon pathogen infection promotes nodulation; a cellular defense response in which hemocytes surround and isolate invading pathogens forming aggregates called nodules. Involved in activating nodule formation in response to infection with M.luteus, E.coli or S.cerevisiae. Able to bind the microbes M.luteus, E.coli or S.cerevisiae. According to another report, does not bind microorganisms. The sequence is that of CLIP domain-containing serine protease HP8 from Bombyx mori (Silk moth).